A 748-amino-acid polypeptide reads, in one-letter code: 5-methyltetrahydropteroyltriglutamate--homocysteine methyltransferase (748 aa).

Residues 18–21 (REWK) and K112 contribute to the 5-methyltetrahydropteroyltri-L-glutamate site. L-homocysteine is bound by residues 420-422 (IGS) and E473. Residues 420-422 (IGS) and E473 each bind L-methionine. W550 serves as a coordination point for 5-methyltetrahydropteroyltri-L-glutamate. D588 is an L-homocysteine binding site. D588 contributes to the L-methionine binding site. Residue E594 participates in 5-methyltetrahydropteroyltri-L-glutamate binding. Zn(2+) is bound by residues H630, C632, and E654. H683 functions as the Proton donor in the catalytic mechanism. Residue C715 coordinates Zn(2+).

The protein belongs to the vitamin-B12 independent methionine synthase family. Zn(2+) serves as cofactor.

It catalyses the reaction 5-methyltetrahydropteroyltri-L-glutamate + L-homocysteine = tetrahydropteroyltri-L-glutamate + L-methionine. The protein operates within amino-acid biosynthesis; L-methionine biosynthesis via de novo pathway; L-methionine from L-homocysteine (MetE route): step 1/1. Catalyzes the transfer of a methyl group from 5-methyltetrahydrofolate to homocysteine resulting in methionine formation. This chain is 5-methyltetrahydropteroyltriglutamate--homocysteine methyltransferase, found in Staphylococcus epidermidis (strain ATCC 12228 / FDA PCI 1200).